Consider the following 529-residue polypeptide: ADP,ATP carrier protein 1 (529 aa).

12 consecutive transmembrane segments (helical) span residues 24–44 (LKKV…YTIL), 63–83 (IPFI…LIYA), 93–113 (ALFY…PLVI), 124–144 (DFAD…IAML), 149–169 (FAAF…LMFW), 184–204 (FYAL…PAIV), 220–240 (WGVT…IIAA), 284–304 (YMLL…LVEV), 322–342 (AFMG…MLFI), 356–376 (ALVT…LVIF), 381–401 (TGLV…VGAV), and 463–483 (ISAM…VWLT). Positions 509-520 (AAEKEASPAAKE) are enriched in low complexity. The disordered stretch occupies residues 509–529 (AAEKEASPAAKEVSPAIEGVS).

It belongs to the ADP/ATP translocase tlc family.

The protein localises to the cell membrane. The polypeptide is ADP,ATP carrier protein 1 (tlcA) (Chlamydia muridarum (strain MoPn / Nigg)).